Reading from the N-terminus, the 310-residue chain is uncharacterized protein (310 aa).

At 1–6 (MISEKA) the chain is on the cytoplasmic side. Residues 5-69 (KAATALATIA…SKGNVILQVQ (65 aa)) enclose the PQ-loop 1 domain. Residues 7–27 (ATALATIATVCWCVQLIPQII) traverse the membrane as a helical segment. Over 28–36 (YNWKKKDCT) the chain is Extracellular. Residues 37–57 (GLPPLMMFLWVVSGIPFAIYF) form a helical membrane-spanning segment. The Cytoplasmic portion of the chain corresponds to 58–61 (CVSK). Residues 62 to 82 (GNVILQVQPHLFMFFCSISFV) traverse the membrane as a helical segment. The Extracellular segment spans residues 83 to 96 (QSCYYPPISMARSK). Residues 97–117 (IVMIVAAIIAADVGMEVGFIL) traverse the membrane as a helical segment. The Cytoplasmic portion of the chain corresponds to 118-131 (WLRPLYEKGVKWPD). A helical membrane pass occupies residues 132-152 (LIFGISASVLLAVGLLPPYFE). The PQ-loop 2 domain occupies 138–194 (ASVLLAVGLLPPYFELAKRKGRVIGINFAFLFIDSLGAWLSIISVILGNMDIMGIIL). Over 153-164 (LAKRKGRVIGIN) the chain is Extracellular. The chain crosses the membrane as a helical span at residues 165 to 185 (FAFLFIDSLGAWLSIISVILG). Residues 186–191 (NMDIMG) are Cytoplasmic-facing. The helical transmembrane segment at 192–212 (IILYSIVAGMELGIFASHFIW) threads the bilayer. Over 213–310 (WCRFRFLAKG…DPDRYSRLSV (98 aa)) the chain is Extracellular. Phosphoserine is present on S229. N-linked (GlcNAc...) asparagine glycosylation is found at N251 and N259.

The protein resides in the cell membrane. This is an uncharacterized protein from Saccharomyces cerevisiae (strain ATCC 204508 / S288c) (Baker's yeast).